Consider the following 145-residue polypeptide: Large ribosomal subunit protein uL15 (145 aa).

Residues 1 to 55 (MSLLKTLAPKAGSKHAPKRIGRGIGSGMGGTATKGHKGQLARTGGTVRRGFEGGQ) form a disordered region. The segment covering 12 to 21 (GSKHAPKRIG) has biased composition (basic residues). Over residues 22–32 (RGIGSGMGGTA) the composition is skewed to gly residues.

It belongs to the universal ribosomal protein uL15 family. Part of the 50S ribosomal subunit.

Its function is as follows. Binds to the 23S rRNA. This Bdellovibrio bacteriovorus (strain ATCC 15356 / DSM 50701 / NCIMB 9529 / HD100) protein is Large ribosomal subunit protein uL15.